Reading from the N-terminus, the 478-residue chain is uncharacterized protein (478 aa).

The RCK N-terminal domain occupies M2–E120.

This is an uncharacterized protein from Methanocaldococcus jannaschii (strain ATCC 43067 / DSM 2661 / JAL-1 / JCM 10045 / NBRC 100440) (Methanococcus jannaschii).